Reading from the N-terminus, the 190-residue chain is Tereporin-Ca1 (190 aa).

The interval Thr-2–Arg-21 is N-terminal region. Residues Gly-78, Ser-96, Pro-98, Tyr-131, and Tyr-132 each coordinate phosphocholine. Positions Lys-138–Glu-140 match the Cell attachment site, crucial for protein stability motif.

Belongs to the actinoporin family. Conoidea subfamily. In terms of assembly, octamer or nonamer in membranes. Monomer in the soluble state. As to expression, expressed by the venom duct.

Its subcellular location is the secreted. The protein resides in the nematocyst. It is found in the target cell membrane. Its function is as follows. Pore-forming protein that forms pores of around 1 nm and causes cardiac stimulation and cytolysis. This Terebra anilis (Auger snail) protein is Tereporin-Ca1.